Reading from the N-terminus, the 461-residue chain is Bifunctional protein HldE (461 aa).

Positions Met-1–Glu-312 are ribokinase. Asn-191–Glu-194 is a binding site for ATP. Asp-259 is an active-site residue. Positions Phe-334–Lys-461 are cytidylyltransferase.

In the N-terminal section; belongs to the carbohydrate kinase PfkB family. It in the C-terminal section; belongs to the cytidylyltransferase family. Homodimer.

The catalysed reaction is D-glycero-beta-D-manno-heptose 7-phosphate + ATP = D-glycero-beta-D-manno-heptose 1,7-bisphosphate + ADP + H(+). The enzyme catalyses D-glycero-beta-D-manno-heptose 1-phosphate + ATP + H(+) = ADP-D-glycero-beta-D-manno-heptose + diphosphate. It participates in nucleotide-sugar biosynthesis; ADP-L-glycero-beta-D-manno-heptose biosynthesis; ADP-L-glycero-beta-D-manno-heptose from D-glycero-beta-D-manno-heptose 7-phosphate: step 1/4. The protein operates within nucleotide-sugar biosynthesis; ADP-L-glycero-beta-D-manno-heptose biosynthesis; ADP-L-glycero-beta-D-manno-heptose from D-glycero-beta-D-manno-heptose 7-phosphate: step 3/4. Catalyzes the phosphorylation of D-glycero-D-manno-heptose 7-phosphate at the C-1 position to selectively form D-glycero-beta-D-manno-heptose-1,7-bisphosphate. Functionally, catalyzes the ADP transfer from ATP to D-glycero-beta-D-manno-heptose 1-phosphate, yielding ADP-D-glycero-beta-D-manno-heptose. In Campylobacter jejuni subsp. jejuni serotype O:6 (strain 81116 / NCTC 11828), this protein is Bifunctional protein HldE.